The chain runs to 314 residues: Ribosomal protein L11 methyltransferase (314 aa).

Residues T166, G187, D209, and N251 each contribute to the S-adenosyl-L-methionine site.

The protein belongs to the methyltransferase superfamily. PrmA family.

Its subcellular location is the cytoplasm. The catalysed reaction is L-lysyl-[protein] + 3 S-adenosyl-L-methionine = N(6),N(6),N(6)-trimethyl-L-lysyl-[protein] + 3 S-adenosyl-L-homocysteine + 3 H(+). Its function is as follows. Methylates ribosomal protein L11. The chain is Ribosomal protein L11 methyltransferase from Clostridium tetani (strain Massachusetts / E88).